A 165-amino-acid polypeptide reads, in one-letter code: Small ribosomal subunit protein uS5 (165 aa).

Positions 10-73 (QIEKLISLNR…TSARKNLRFV (64 aa)) constitute an S5 DRBM domain.

It belongs to the universal ribosomal protein uS5 family. As to quaternary structure, part of the 30S ribosomal subunit. Contacts proteins S4 and S8.

In terms of biological role, with S4 and S12 plays an important role in translational accuracy. Its function is as follows. Located at the back of the 30S subunit body where it stabilizes the conformation of the head with respect to the body. The protein is Small ribosomal subunit protein uS5 of Borreliella afzelii (strain PKo) (Borrelia afzelii).